The chain runs to 88 residues: Homeobox protein knotted-1-like 11 (88 aa).

In terms of domain architecture, ELK spans 4-24 (ELKEMLLKKYSGCLSRLRSEF). Positions 25–88 (LKKRKKGKLP…NQRKRHWKPS (64 aa)) form a DNA-binding region, homeobox; TALE-type.

It belongs to the TALE/KNOX homeobox family.

The protein resides in the nucleus. Functionally, probably binds to the DNA sequence 5'-TGAC-3'. The polypeptide is Homeobox protein knotted-1-like 11 (KNOX11) (Zea mays (Maize)).